Consider the following 239-residue polypeptide: Probable transcriptional regulatory protein LMOf2365_0385 (239 aa).

The protein belongs to the TACO1 family. YeeN subfamily.

The protein resides in the cytoplasm. This is Probable transcriptional regulatory protein LMOf2365_0385 from Listeria monocytogenes serotype 4b (strain F2365).